The primary structure comprises 432 residues: GTPase Obg (432 aa).

An Obg domain is found at 1-158 (MFVDQVKIYV…RNIILELKLL (158 aa)). The region spanning 159 to 329 (ADVGLVGFPS…LLFAIADLLE (171 aa)) is the OBG-type G domain. GTP is bound by residues 165–172 (GFPSVGKS), 190–194 (FTTLV), 212–215 (DLPG), 282–285 (NKMD), and 310–312 (SAA). Mg(2+)-binding residues include Ser172 and Thr192. An OCT domain is found at 350 to 428 (KYEKEEPPFT…LLDYEFEFVD (79 aa)).

The protein belongs to the TRAFAC class OBG-HflX-like GTPase superfamily. OBG GTPase family. Monomer. Mg(2+) is required as a cofactor.

The protein resides in the cytoplasm. Functionally, an essential GTPase which binds GTP, GDP and possibly (p)ppGpp with moderate affinity, with high nucleotide exchange rates and a fairly low GTP hydrolysis rate. Plays a role in control of the cell cycle, stress response, ribosome biogenesis and in those bacteria that undergo differentiation, in morphogenesis control. The chain is GTPase Obg from Geobacillus kaustophilus (strain HTA426).